Here is a 428-residue protein sequence, read N- to C-terminus: Phosphoribosylamine--glycine ligase (428 aa).

Residues K109–D316 form the ATP-grasp domain. L135–S196 contributes to the ATP binding site. The segment at S211 to P235 is disordered. Over residues Q213 to R223 the composition is skewed to basic and acidic residues. 2 residues coordinate Mg(2+): E286 and N288.

The protein belongs to the GARS family. The cofactor is Mg(2+). Mn(2+) serves as cofactor.

It carries out the reaction 5-phospho-beta-D-ribosylamine + glycine + ATP = N(1)-(5-phospho-beta-D-ribosyl)glycinamide + ADP + phosphate + H(+). The protein operates within purine metabolism; IMP biosynthesis via de novo pathway; N(1)-(5-phospho-D-ribosyl)glycinamide from 5-phospho-alpha-D-ribose 1-diphosphate: step 2/2. This is Phosphoribosylamine--glycine ligase (purD) from Allochromatium vinosum (strain ATCC 17899 / DSM 180 / NBRC 103801 / NCIMB 10441 / D) (Chromatium vinosum).